A 557-amino-acid polypeptide reads, in one-letter code: Hyaluronan synthase 3 (557 aa).

Residues 1–10 (MPGKFQTGLR) are Cytoplasmic-facing. A helical membrane pass occupies residues 11–31 (VLATCLFALLVLGGILVAYVT). The Extracellular segment spans residues 32-44 (GYQFIHTDRHHLS). Residues 45-65 (FGLYGAILGLHLLSQSLFAFL) form a helical membrane-spanning segment. Topologically, residues 66–367 (EHRKMRGGGR…NALWFHKHHL (302 aa)) are cytoplasmic. A helical membrane pass occupies residues 368-388 (WMTYESVVTGFFPFFLVATVV). Residues 389-398 (QLFYRGRVWN) are Extracellular-facing. A helical transmembrane segment spans residues 399-419 (ILLFLLTVQLVGILKATYACI). The Cytoplasmic segment spans residues 420–430 (LRGNAEMIFMS). A helical transmembrane segment spans residues 431 to 451 (LYSLLYMTSLLPAKIFAVITI). Residues 452–463 (KKSGWGTSGRRK) lie on the Extracellular side of the membrane. A helical transmembrane segment spans residues 464 to 484 (LVVNFMGMVPVSVWFCILLGG). Topologically, residues 485–501 (LVYTAYCQSHDPFTETE) are cytoplasmic. The helical transmembrane segment at 502–522 (LLFLLTGAILYGCYWVALLSL) threads the bilayer. Over 523–557 (YLALIARRCGKRQELYNLALEEVSEPEPAAKAIKP) the chain is Extracellular.

This sequence belongs to the NodC/HAS family. The cofactor is Mg(2+). In terms of processing, O-GlcNAcylation increases the hyaluronan synthase activity, HAS3 stability and its plasma membrane residence. The concentration of UDP-GlcNAc controls the level of O-GlcNAc modification.

Its subcellular location is the cell membrane. The protein resides in the golgi apparatus membrane. The protein localises to the golgi apparatus. It is found in the trans-Golgi network membrane. It localises to the cytoplasmic vesicle. It catalyses the reaction [hyaluronan](n) + UDP-N-acetyl-alpha-D-glucosamine = N-acetyl-beta-D-glucosaminyl-(1-&gt;4)-[hyaluronan](n) + UDP + H(+). It carries out the reaction N-acetyl-beta-D-glucosaminyl-(1-&gt;4)-[hyaluronan](n) + UDP-alpha-D-glucuronate = [hyaluronan](n+1) + UDP + H(+). Its pathway is glycan biosynthesis; hyaluronan biosynthesis. Its function is as follows. Catalyzes the addition of GlcNAc or GlcUA monosaccharides to the nascent hyaluronan polymer. Therefore, it is essential to hyaluronan synthesis a major component of most extracellular matrices that has a structural role in tissues architectures and regulates cell adhesion, migration and differentiation. This is one of three isoenzymes responsible for cellular hyaluronan synthesis. This is Hyaluronan synthase 3 (has3) from Xenopus laevis (African clawed frog).